The following is a 403-amino-acid chain: Methylthioribose-1-phosphate isomerase (403 aa).

Catalysis depends on Asp280, which acts as the Proton donor.

It belongs to the eIF-2B alpha/beta/delta subunits family. MtnA subfamily.

The protein localises to the cytoplasm. The protein resides in the nucleus. The enzyme catalyses 5-(methylsulfanyl)-alpha-D-ribose 1-phosphate = 5-(methylsulfanyl)-D-ribulose 1-phosphate. It participates in amino-acid biosynthesis; L-methionine biosynthesis via salvage pathway; L-methionine from S-methyl-5-thio-alpha-D-ribose 1-phosphate: step 1/6. Its function is as follows. Catalyzes the interconversion of methylthioribose-1-phosphate (MTR-1-P) into methylthioribulose-1-phosphate (MTRu-1-P). The polypeptide is Methylthioribose-1-phosphate isomerase (Eremothecium gossypii (strain ATCC 10895 / CBS 109.51 / FGSC 9923 / NRRL Y-1056) (Yeast)).